The chain runs to 159 residues: Ribosomal RNA large subunit methyltransferase H (159 aa).

Residues Leu76, Gly108, and Phe127–Phe132 each bind S-adenosyl-L-methionine.

The protein belongs to the RNA methyltransferase RlmH family. Homodimer.

It localises to the cytoplasm. The enzyme catalyses pseudouridine(1915) in 23S rRNA + S-adenosyl-L-methionine = N(3)-methylpseudouridine(1915) in 23S rRNA + S-adenosyl-L-homocysteine + H(+). Its function is as follows. Specifically methylates the pseudouridine at position 1915 (m3Psi1915) in 23S rRNA. This Geobacillus thermodenitrificans (strain NG80-2) protein is Ribosomal RNA large subunit methyltransferase H.